Here is a 417-residue protein sequence, read N- to C-terminus: Phosphoribosylamine--glycine ligase (417 aa).

In terms of domain architecture, ATP-grasp spans 107–313 (KQIMAKYEIP…FLEIIEATLE (207 aa)). 133 to 194 (LKETWYPVVI…EEMLYGKEAS (62 aa)) contributes to the ATP binding site. Mg(2+) contacts are provided by glutamate 283 and asparagine 285.

Belongs to the GARS family. It depends on Mg(2+) as a cofactor. Mn(2+) serves as cofactor.

The catalysed reaction is 5-phospho-beta-D-ribosylamine + glycine + ATP = N(1)-(5-phospho-beta-D-ribosyl)glycinamide + ADP + phosphate + H(+). The protein operates within purine metabolism; IMP biosynthesis via de novo pathway; N(1)-(5-phospho-D-ribosyl)glycinamide from 5-phospho-alpha-D-ribose 1-diphosphate: step 2/2. This chain is Phosphoribosylamine--glycine ligase, found in Caldanaerobacter subterraneus subsp. tengcongensis (strain DSM 15242 / JCM 11007 / NBRC 100824 / MB4) (Thermoanaerobacter tengcongensis).